Reading from the N-terminus, the 112-residue chain is Large ribosomal subunit protein mL53 (112 aa).

It belongs to the mitochondrion-specific ribosomal protein mL53 family. In terms of assembly, component of the mitochondrial ribosome large subunit (39S) which comprises a 16S rRNA and about 50 distinct proteins.

The protein localises to the mitochondrion. In Pongo abelii (Sumatran orangutan), this protein is Large ribosomal subunit protein mL53 (MRPL53).